A 177-amino-acid chain; its full sequence is Inorganic pyrophosphatase (177 aa).

Substrate is bound by residues lysine 30, arginine 44, and tyrosine 56. Mg(2+) contacts are provided by aspartate 66, aspartate 71, and aspartate 103. Residue tyrosine 142 coordinates substrate.

Belongs to the PPase family. Homohexamer. Requires Mg(2+) as cofactor.

Its subcellular location is the cytoplasm. The catalysed reaction is diphosphate + H2O = 2 phosphate + H(+). Its function is as follows. Catalyzes the hydrolysis of inorganic pyrophosphate (PPi) forming two phosphate ions. This is Inorganic pyrophosphatase from Mesorhizobium japonicum (strain LMG 29417 / CECT 9101 / MAFF 303099) (Mesorhizobium loti (strain MAFF 303099)).